A 495-amino-acid chain; its full sequence is Lysine--tRNA ligase (495 aa).

Positions 406 and 413 each coordinate Mg(2+).

The protein belongs to the class-II aminoacyl-tRNA synthetase family. As to quaternary structure, homodimer. Mg(2+) is required as a cofactor.

The protein localises to the cytoplasm. It carries out the reaction tRNA(Lys) + L-lysine + ATP = L-lysyl-tRNA(Lys) + AMP + diphosphate. This is Lysine--tRNA ligase from Leuconostoc mesenteroides subsp. mesenteroides (strain ATCC 8293 / DSM 20343 / BCRC 11652 / CCM 1803 / JCM 6124 / NCDO 523 / NBRC 100496 / NCIMB 8023 / NCTC 12954 / NRRL B-1118 / 37Y).